The following is a 94-amino-acid chain: MLKPLGDRVVLKVEEEKEQTVGGFVLAGASKERTQVATVVAVGDGARTLTGELVAPSVAAGDKVIIENGVGIEVKDDDNTVTIVREADILAILA.

Belongs to the GroES chaperonin family. Heptamer of 7 subunits arranged in a ring. Interacts with the chaperonin GroEL.

The protein resides in the cytoplasm. Functionally, together with the chaperonin GroEL, plays an essential role in assisting protein folding. The GroEL-GroES system forms a nano-cage that allows encapsulation of the non-native substrate proteins and provides a physical environment optimized to promote and accelerate protein folding. GroES binds to the apical surface of the GroEL ring, thereby capping the opening of the GroEL channel. The chain is Co-chaperonin GroES from Streptococcus equinus (Streptococcus bovis).